We begin with the raw amino-acid sequence, 166 residues long: Protein YciF (166 aa).

In terms of assembly, homodimer.

The chain is Protein YciF (yciF) from Escherichia coli (strain K12).